The sequence spans 274 residues: Purine nucleoside phosphorylase 1 (274 aa).

Residues S29, H60, 80–82 (RFH), and A112 contribute to the phosphate site. S29 carries the phosphoserine modification. Residue E192 participates in a purine D-ribonucleoside binding. S211 provides a ligand contact to phosphate. An a purine D-ribonucleoside-binding site is contributed by N234.

Belongs to the PNP/MTAP phosphorylase family. In terms of assembly, homotrimer.

The catalysed reaction is a purine D-ribonucleoside + phosphate = a purine nucleobase + alpha-D-ribose 1-phosphate. The enzyme catalyses a purine 2'-deoxy-D-ribonucleoside + phosphate = a purine nucleobase + 2-deoxy-alpha-D-ribose 1-phosphate. The protein operates within purine metabolism; purine nucleoside salvage. Functionally, the purine nucleoside phosphorylases catalyze the phosphorolytic breakdown of the N-glycosidic bond in the beta-(deoxy)ribonucleoside molecules, with the formation of the corresponding free purine bases and pentose-1-phosphate. Cleaves guanosine, inosine, 2'-deoxyguanosine and 2'-deoxyinosine. This is Purine nucleoside phosphorylase 1 (punA) from Geobacillus stearothermophilus (Bacillus stearothermophilus).